Reading from the N-terminus, the 185-residue chain is Ribosome-recycling factor (185 aa).

It belongs to the RRF family.

It localises to the cytoplasm. Responsible for the release of ribosomes from messenger RNA at the termination of protein biosynthesis. May increase the efficiency of translation by recycling ribosomes from one round of translation to another. The polypeptide is Ribosome-recycling factor (Clostridioides difficile (strain 630) (Peptoclostridium difficile)).